Reading from the N-terminus, the 806-residue chain is Leucine--tRNA ligase (806 aa).

The short motif at 40–51 (PYPSGQGLHVGH) is the 'HIGH' region element. Positions 578-582 (KMSKS) match the 'KMSKS' region motif. K581 serves as a coordination point for ATP.

The protein belongs to the class-I aminoacyl-tRNA synthetase family.

Its subcellular location is the cytoplasm. It catalyses the reaction tRNA(Leu) + L-leucine + ATP = L-leucyl-tRNA(Leu) + AMP + diphosphate. This chain is Leucine--tRNA ligase, found in Limosilactobacillus reuteri (strain DSM 20016) (Lactobacillus reuteri).